A 225-amino-acid chain; its full sequence is Uracil-DNA glycosylase (225 aa).

The active-site Proton acceptor is the Asp-65.

Belongs to the uracil-DNA glycosylase (UDG) superfamily. UNG family.

The protein resides in the cytoplasm. It carries out the reaction Hydrolyzes single-stranded DNA or mismatched double-stranded DNA and polynucleotides, releasing free uracil.. Its function is as follows. Excises uracil residues from the DNA which can arise as a result of misincorporation of dUMP residues by DNA polymerase or due to deamination of cytosine. This Bacillus cereus (strain G9842) protein is Uracil-DNA glycosylase.